Reading from the N-terminus, the 149-residue chain is uncharacterized protein (149 aa).

The helical transmembrane segment at 124–144 (IIIIALIIILANYAPSIIGKI) threads the bilayer.

Belongs to the M.jannaschii MJ0023/MJ0349/MJ1072/MJ1074/MJ1107/MJECL16 family.

The protein localises to the membrane. This is an uncharacterized protein from Methanocaldococcus jannaschii (strain ATCC 43067 / DSM 2661 / JAL-1 / JCM 10045 / NBRC 100440) (Methanococcus jannaschii).